The primary structure comprises 407 residues: Methylthioribose-1-phosphate isomerase (407 aa).

D275 (proton donor) is an active-site residue.

The protein belongs to the eIF-2B alpha/beta/delta subunits family. MtnA subfamily.

It localises to the cytoplasm. It is found in the nucleus. The enzyme catalyses 5-(methylsulfanyl)-alpha-D-ribose 1-phosphate = 5-(methylsulfanyl)-D-ribulose 1-phosphate. Its pathway is amino-acid biosynthesis; L-methionine biosynthesis via salvage pathway; L-methionine from S-methyl-5-thio-alpha-D-ribose 1-phosphate: step 1/6. In terms of biological role, catalyzes the interconversion of methylthioribose-1-phosphate (MTR-1-P) into methylthioribulose-1-phosphate (MTRu-1-P). The polypeptide is Methylthioribose-1-phosphate isomerase (Kluyveromyces lactis (strain ATCC 8585 / CBS 2359 / DSM 70799 / NBRC 1267 / NRRL Y-1140 / WM37) (Yeast)).